The chain runs to 132 residues: Large ribosomal subunit protein eL28 (132 aa).

Belongs to the eukaryotic ribosomal protein eL28 family.

The protein is Large ribosomal subunit protein eL28 (rpl28) of Dictyostelium discoideum (Social amoeba).